The chain runs to 387 residues: Enoyl-[acyl-carrier-protein] reductase 2, mitochondrial (387 aa).

Residues 1–23 (MYRNQLARASLRSTSSINQIRNM) constitute a mitochondrion transit peptide. Tyr-79 functions as the Proton donor in the catalytic mechanism. NADP(+) is bound by residues Asn-172, 199–202 (NSAV), 222–224 (RDR), 297–300 (YGGM), 322–324 (FWV), and Lys-382.

Belongs to the zinc-containing alcohol dehydrogenase family. Quinone oxidoreductase subfamily. As to quaternary structure, homodimer.

The protein resides in the mitochondrion matrix. It catalyses the reaction a 2,3-saturated acyl-[ACP] + NADP(+) = a (2E)-enoyl-[ACP] + NADPH + H(+). In terms of biological role, catalyzes the NADPH-dependent reduction of trans-2-enoyl thioesters in mitochondrial fatty acid synthesis (fatty acid synthesis type II). Fatty acid chain elongation in mitochondria uses acyl carrier protein (ACP) as an acyl group carrier, but the enzyme accepts both ACP and CoA thioesters as substrates in vitro. Required for respiration and the maintenance of the mitochondrial compartment. This Debaryomyces hansenii (strain ATCC 36239 / CBS 767 / BCRC 21394 / JCM 1990 / NBRC 0083 / IGC 2968) (Yeast) protein is Enoyl-[acyl-carrier-protein] reductase 2, mitochondrial (ETR2).